A 573-amino-acid chain; its full sequence is DNA ligase (573 aa).

Residue Glu-250 coordinates ATP. Lys-252 serves as the catalytic N6-AMP-lysine intermediate. Residues Arg-257, Arg-272, Glu-301, Phe-342, Arg-432, and Lys-438 each contribute to the ATP site.

It belongs to the ATP-dependent DNA ligase family. The cofactor is Mg(2+).

It catalyses the reaction ATP + (deoxyribonucleotide)n-3'-hydroxyl + 5'-phospho-(deoxyribonucleotide)m = (deoxyribonucleotide)n+m + AMP + diphosphate.. Functionally, DNA ligase that seals nicks in double-stranded DNA during DNA replication, DNA recombination and DNA repair. This chain is DNA ligase, found in Methanococcus maripaludis (strain C6 / ATCC BAA-1332).